We begin with the raw amino-acid sequence, 611 residues long: 4-hydroxy-3-methylbut-2-en-1-yl diphosphate synthase (flavodoxin) (611 aa).

[4Fe-4S] cluster-binding residues include C520, C523, C554, and E561.

The protein belongs to the IspG family. [4Fe-4S] cluster is required as a cofactor.

It carries out the reaction (2E)-4-hydroxy-3-methylbut-2-enyl diphosphate + oxidized [flavodoxin] + H2O + 2 H(+) = 2-C-methyl-D-erythritol 2,4-cyclic diphosphate + reduced [flavodoxin]. The protein operates within isoprenoid biosynthesis; isopentenyl diphosphate biosynthesis via DXP pathway; isopentenyl diphosphate from 1-deoxy-D-xylulose 5-phosphate: step 5/6. Converts 2C-methyl-D-erythritol 2,4-cyclodiphosphate (ME-2,4cPP) into 1-hydroxy-2-methyl-2-(E)-butenyl 4-diphosphate. This chain is 4-hydroxy-3-methylbut-2-en-1-yl diphosphate synthase (flavodoxin), found in Parabacteroides distasonis (strain ATCC 8503 / DSM 20701 / CIP 104284 / JCM 5825 / NCTC 11152).